We begin with the raw amino-acid sequence, 165 residues long: Growth arrest and DNA damage-inducible protein GADD45 alpha (165 aa).

Threonine 2 carries the phosphothreonine modification.

This sequence belongs to the GADD45 family. In terms of assembly, interacts with AURKA, PCNA, GADD45GIP1 and MAPK14.

It localises to the nucleus. In terms of biological role, might affect PCNA interaction with some CDK (cell division protein kinase) complexes; stimulates DNA excision repair in vitro and inhibits entry of cells into S phase. In T-cells, functions as a regulator of p38 MAPKs by inhibiting p88 phosphorylation and activity. This chain is Growth arrest and DNA damage-inducible protein GADD45 alpha (GADD45A), found in Bos taurus (Bovine).